The following is a 286-amino-acid chain: MYLQDVIMKLNDFWASKGCLLEQPYDMEVGAGTFHPATFFGSLRKGLWKVAYVQPSRRPTDGRYGENPNRLQRYFQYQVIIKPSPENSQELYLESLEYLGINLKEHDIRFVEDNWESPTLGAWGVGWEVWLDGMEITQFTYFQQIGGISLKDIPLEITYGLERIAMYLQGVDNVYEVQWNENVKYGDVFLENEREFSVFNFEEANVGLLFRHFDEYEKEFYRLVEKNLYLPAYDYVLKCSHTFNLLDARGAISVSQRQTYVKRIQAMARKVARVFLEVQVNENSPA.

It belongs to the class-II aminoacyl-tRNA synthetase family. As to quaternary structure, tetramer of two alpha and two beta subunits.

It localises to the cytoplasm. The enzyme catalyses tRNA(Gly) + glycine + ATP = glycyl-tRNA(Gly) + AMP + diphosphate. The sequence is that of Glycine--tRNA ligase alpha subunit from Thermotoga petrophila (strain ATCC BAA-488 / DSM 13995 / JCM 10881 / RKU-1).